The following is a 210-amino-acid chain: uncharacterized protein (210 aa).

This is an uncharacterized protein from Nostoc sp. (strain PCC 7120 / SAG 25.82 / UTEX 2576).